The sequence spans 444 residues: Exodeoxyribonuclease 7 large subunit (444 aa).

This sequence belongs to the XseA family. Heterooligomer composed of large and small subunits.

The protein resides in the cytoplasm. It catalyses the reaction Exonucleolytic cleavage in either 5'- to 3'- or 3'- to 5'-direction to yield nucleoside 5'-phosphates.. Functionally, bidirectionally degrades single-stranded DNA into large acid-insoluble oligonucleotides, which are then degraded further into small acid-soluble oligonucleotides. The polypeptide is Exodeoxyribonuclease 7 large subunit (Hahella chejuensis (strain KCTC 2396)).